Here is a 388-residue protein sequence, read N- to C-terminus: Succinate--CoA ligase [ADP-forming] subunit beta (388 aa).

An ATP-grasp domain is found at 9 to 245 (KELLKSYGLP…KSQENERELK (237 aa)). ATP is bound by residues lysine 46, 53–55 (GRG), glutamate 100, tyrosine 103, and glutamate 108. Residues asparagine 200 and aspartate 214 each coordinate Mg(2+). Residues asparagine 265 and 322-324 (GIV) each bind substrate.

Belongs to the succinate/malate CoA ligase beta subunit family. Heterotetramer of two alpha and two beta subunits. Mg(2+) is required as a cofactor.

The catalysed reaction is succinate + ATP + CoA = succinyl-CoA + ADP + phosphate. It carries out the reaction GTP + succinate + CoA = succinyl-CoA + GDP + phosphate. Its pathway is carbohydrate metabolism; tricarboxylic acid cycle; succinate from succinyl-CoA (ligase route): step 1/1. Its function is as follows. Succinyl-CoA synthetase functions in the citric acid cycle (TCA), coupling the hydrolysis of succinyl-CoA to the synthesis of either ATP or GTP and thus represents the only step of substrate-level phosphorylation in the TCA. The beta subunit provides nucleotide specificity of the enzyme and binds the substrate succinate, while the binding sites for coenzyme A and phosphate are found in the alpha subunit. The chain is Succinate--CoA ligase [ADP-forming] subunit beta from Psychrobacter cryohalolentis (strain ATCC BAA-1226 / DSM 17306 / VKM B-2378 / K5).